The following is a 178-amino-acid chain: Ribosome maturation factor RimM (178 aa).

Residues 101–178 enclose the PRC barrel domain; sequence TDEYYWYQLV…VMRVEWDADF (78 aa).

The protein belongs to the RimM family. As to quaternary structure, binds ribosomal protein uS19.

It localises to the cytoplasm. Its function is as follows. An accessory protein needed during the final step in the assembly of 30S ribosomal subunit, possibly for assembly of the head region. Essential for efficient processing of 16S rRNA. May be needed both before and after RbfA during the maturation of 16S rRNA. It has affinity for free ribosomal 30S subunits but not for 70S ribosomes. This is Ribosome maturation factor RimM from Pseudomonas entomophila (strain L48).